A 504-amino-acid polypeptide reads, in one-letter code: Pentatricopeptide repeat-containing protein At1g05600 (504 aa).

PPR repeat units lie at residues 45 to 79 (NGSV…SCEC), 80 to 114 (KDSV…NCVN), 115 to 145 (WSLS…YCYG), 151 to 185 (RITA…GCYP), 186 to 216 (DRDS…MFWR), 225 to 259 (DIVV…GLKA), 260 to 296 (PKRC…GAIP), 297 to 331 (CLDS…GFEP), 332 to 367 (TPFI…HCLP), 368 to 398 (TVGV…MSKQ), 404 to 438 (NEET…SHFP), and 439 to 473 (GVET…DMVP).

The protein belongs to the PPR family. P subfamily.

This is Pentatricopeptide repeat-containing protein At1g05600 from Arabidopsis thaliana (Mouse-ear cress).